The sequence spans 624 residues: Exocyst complex component EXO70B1 (624 aa).

The disordered stretch occupies residues 148-176 (FGLNPQGDAGAMNHRFDSEEEEDDDRDFN).

This sequence belongs to the EXO70 family. As to quaternary structure, interacts with EXO70B2, SEC5A and EXO84B. Binds to PUB18. Binds directly to B1L at the plasma membrane and in small vesicles. In terms of processing, target of the E3 ubiquitin-protein ligase PUB18 that mediates its ubiquitination and degradation via the 26S proteasome.

It is found in the cytoplasmic vesicle. The protein localises to the phagosome. Its subcellular location is the endomembrane system. It localises to the cell membrane. The protein resides in the vesicle. Functionally, component of an exocyst subcomplex specifically involved in autophagy-related, Golgi-independent membrane traffic to the vacuole. Regulates autophagosome formation and autophagy-related Golgi-independent import into the vacuole. Positive regulator of both abscisic acid (ABA)-promoted and mannitol (drought)-promoted stomatal closure. Involved in the regulation of lateral root formation. The sequence is that of Exocyst complex component EXO70B1 from Arabidopsis thaliana (Mouse-ear cress).